The chain runs to 569 residues: MSDDARDTIANGVGEDAAEMPNSDSPAEDAAEVQCGPATTSNEPAPDDHMEEQPEITAMCAESTPPGILDQSKASAADETPLNGEVTEDTLVECVDSVSLEGDTGSEIPLKEQDDAAVDPSSQAGRWAGWGSWGKSLLSSASATVGHGLTAVKEKAGATLRIHSANSASPEGAPTDAENGISGNVTPDQDPARGPHTPPPPGAAGSRGMLSALTNVVQNTGKSVLTGGLDALEFIGKKTMIVLAESDPGFKRTKTLMERTVSLSQMLREAKEKEKQRLAQQLTVERTAHYGMLFDEYQGLSHLEALEILSNESESKVQSFLTSLDGEKLELLKNDLISIKDIFVAKESENEANPEEQGLEESGEEFARMLTELLFELHVAATPDKLNKAMKKAHDWVEEDQSVVSIDVAKGSEEEEKEEGKEEKAEEPEEDKTGGQGAKTVEEVYMLSIESLAEVTARCIEQLHKVAELILHGQEEEKPAQDQARVLIKLTTAMCNEVTSLSKKFTNSLTTVGSNKKAEVLNPMINSVFLEGSNSTTYVQDALQLLLPVLQVSHIRTSCLKATAQPDCS.

Disordered regions lie at residues 1–87 (MSDD…GEVT), 102–126 (GDTG…QAGR), and 165–208 (ANSA…GSRG). Position 197 is a phosphothreonine (Thr-197). At Ser-262 the chain carries Phosphoserine. Positions 404–439 (VSIDVAKGSEEEEKEEGKEEKAEEPEEDKTGGQGAK) are disordered.

The protein belongs to the FAM114 family. Over-expressed in brain. Also detected in lung, stomach, and in a lower extent in testis and thymus.

It localises to the cytoplasm. May play a role in neuronal cell development. The polypeptide is Protein Noxp20 (Fam114a1) (Mus musculus (Mouse)).